A 102-amino-acid chain; its full sequence is Large ribosomal subunit protein bL21 (102 aa).

Belongs to the bacterial ribosomal protein bL21 family. Part of the 50S ribosomal subunit. Contacts protein L20.

Its function is as follows. This protein binds to 23S rRNA in the presence of protein L20. The protein is Large ribosomal subunit protein bL21 of Clavibacter sepedonicus (Clavibacter michiganensis subsp. sepedonicus).